The chain runs to 518 residues: MKKLKINYLFIGILALLLAVALWPSIPWFGKADNRIAAIQARGELRVSTIHTPLTYNEINGKPFGLDYELAKQFADYLGVKLKVTVRQNISQLFDDLDNGNADLLAAGLVYNSERVKNYQPGPTYYSVSQQLVYKVGQYRPRTLCNLTAEQLTVAPGHVVVNDLQTLKETKFPELSWKVDDKKGSAELMEDVIEGKLDYTIADSVAISLFQRVHPELAVALDITDEQPVTWFSPLDGDNTLSAALLDFFNEMNEDGTLARIEEKYLGHGDDFDYVDTRTFLRAVDAVLPQLKPLFEKYAEEIDWRLLAAIAYQESHWDAQATSPTGVRGMMMLTKNTAQSLGITDRTDAEQSISGGVRYLQDMMSKVPESVPENERIWFALAAYNMGYAHMLDARALTAKTKGNPDSWADVKQRLPLLSQKPYYSKLTYGYARGHEAYAYVENIRKYQISLVGYLQEKEKQATEAAMQLAQDYPAVSPTELGKEKFPFLSFLSQSSSNYLTHSPSLLFSRKGSEEKQN.

The N-terminal stretch at 1–21 is a signal peptide; the sequence is MKKLKINYLFIGILALLLAVA. The tract at residues 22-269 is non-LT domain; sequence LWPSIPWFGK…RIEEKYLGHG (248 aa). The interval 270 to 518 is LT domain; sequence DDFDYVDTRT…SRKGSEEKQN (249 aa). Glutamate 314 is a catalytic residue.

The protein in the N-terminal section; belongs to the bacterial solute-binding protein 3 family. It in the C-terminal section; belongs to the transglycosylase Slt family.

It localises to the cell outer membrane. It carries out the reaction Exolytic cleavage of the (1-&gt;4)-beta-glycosidic linkage between N-acetylmuramic acid (MurNAc) and N-acetylglucosamine (GlcNAc) residues in peptidoglycan, from either the reducing or the non-reducing ends of the peptidoglycan chains, with concomitant formation of a 1,6-anhydrobond in the MurNAc residue.. Its function is as follows. Murein-degrading enzyme that degrades murein glycan strands and insoluble, high-molecular weight murein sacculi, with the concomitant formation of a 1,6-anhydromuramoyl product. Lytic transglycosylases (LTs) play an integral role in the metabolism of the peptidoglycan (PG) sacculus. Their lytic action creates space within the PG sacculus to allow for its expansion as well as for the insertion of various structures such as secretion systems and flagella. This Shigella boydii serotype 18 (strain CDC 3083-94 / BS512) protein is Membrane-bound lytic murein transglycosylase F.